A 209-amino-acid polypeptide reads, in one-letter code: Superoxide dismutase [Mn/Fe] (209 aa).

His38, His90, Asp172, and His176 together coordinate Fe(3+). Residues His38, His90, Asp172, and His176 each contribute to the Mn(2+) site.

The protein belongs to the iron/manganese superoxide dismutase family. Requires Mn(2+) as cofactor. Fe(3+) is required as a cofactor.

It carries out the reaction 2 superoxide + 2 H(+) = H2O2 + O2. Its function is as follows. Destroys superoxide anion radicals which are normally produced within the cells and which are toxic to biological systems. Catalyzes the dismutation of superoxide anion radicals into O2 and H2O2 by successive reduction and oxidation of the transition metal ion at the active site. This chain is Superoxide dismutase [Mn/Fe] (sodB), found in Rickettsia conorii (strain ATCC VR-613 / Malish 7).